The following is a 223-amino-acid chain: Neurotrophic factor BDNF precursor form (223 aa).

The signal sequence occupies residues 1 to 5 (SCMKA). Positions 6 to 114 (APMKEVSLRG…AANMSMRVRR (109 aa)) are excised as a propeptide. A glycan (N-linked (GlcNAc...) asparagine) is linked at asparagine 107. 2 disulfide bridges follow: cysteine 127/cysteine 194 and cysteine 172/cysteine 223.

This sequence belongs to the NGF-beta family.

Its subcellular location is the secreted. Promotes the survival of neuronal populations that are all located either in the central nervous system or directly connected to it. This Ramphotyphlops sp. (strain YPM 13663) (Blind snake) protein is Neurotrophic factor BDNF precursor form (BDNF).